The following is a 355-amino-acid chain: Blue-sensitive opsin (355 aa).

Topologically, residues Met1–Ile41 are extracellular. A glycan (N-linked (GlcNAc...) asparagine) is linked at Asn22. The chain crosses the membrane as a helical span at residues Phe42 to Cys66. Over Thr67–Asn78 the chain is Cytoplasmic. A helical membrane pass occupies residues Tyr79–Leu104. Over Asn105–Glu118 the chain is Extracellular. Residues Cys115 and Cys192 are joined by a disulfide bond. Residues Gly119 to Phe138 form a helical membrane-spanning segment. Residues Glu139–His157 are Cytoplasmic-facing. Residues Ala158–Ser181 traverse the membrane as a helical segment. Residues Arg182–Ser207 lie on the Extracellular side of the membrane. The N-linked (GlcNAc...) asparagine glycan is linked to Asn205. The chain crosses the membrane as a helical span at residues Tyr208–Leu235. At Lys236 to Lys257 the chain is on the cytoplasmic side. A helical transmembrane segment spans residues Met258 to Val281. At Phe282 to Asp289 the chain is on the extracellular side. The chain crosses the membrane as a helical span at residues Leu290–Met314. Position 301 is an N6-(retinylidene)lysine (Lys301). Over Asn315 to Lys355 the chain is Cytoplasmic. Residues Gly334 to Lys355 are disordered. The segment covering Ser340–Lys355 has biased composition (low complexity).

It belongs to the G-protein coupled receptor 1 family. Opsin subfamily. In terms of processing, phosphorylated on some or all of the serine and threonine residues present in the C-terminal region. The color pigments are found in the cone photoreceptor cells.

The protein resides in the membrane. Functionally, visual pigments are the light-absorbing molecules that mediate vision. They consist of an apoprotein, opsin, covalently linked to cis-retinal. The sequence is that of Blue-sensitive opsin (B23) from Psalidodon fasciatus (Banded astyanax).